Consider the following 388-residue polypeptide: Diacylglycerol O-acyltransferase 2 (388 aa).

The Cytoplasmic portion of the chain corresponds to 1-69; sequence MKTLIAAYSG…NRSKVEKHLQ (69 aa). Residues 70 to 88 form a helical membrane-spanning segment; sequence VISVLQWVLSFLVLGVACS. The Lumenal segment spans residues 89 to 92; it reads VILM. Residues 93–112 traverse the membrane as a helical segment; it reads YTFCTDCWLIAALYFTWLAF. Residues 113-388 are Cytoplasmic-facing; the sequence is DWNTPKKGGR…LPETEVLEVN (276 aa).

This sequence belongs to the diacylglycerol acyltransferase family. In terms of assembly, forms multimeric complexes consisting of several DGAT2 subunits. Interacts with SLC27A1 and this interaction is enhanced in the presence of ZFYVE1.

The protein resides in the endoplasmic reticulum membrane. The protein localises to the lipid droplet. It localises to the cytoplasm. Its subcellular location is the perinuclear region. The enzyme catalyses an acyl-CoA + a 1,2-diacyl-sn-glycerol = a triacyl-sn-glycerol + CoA. The catalysed reaction is all-trans-retinol + an acyl-CoA = an all-trans-retinyl ester + CoA. It catalyses the reaction 2-(9Z-octadecenoyl)-glycerol + (9Z)-octadecenoyl-CoA = 1,2-di-(9Z-octadecenoyl)-sn-glycerol + CoA. It carries out the reaction 1,2-di-(9Z-octadecenoyl)-sn-glycerol + (9Z)-octadecenoyl-CoA = 1,2,3-tri-(9Z-octadecenoyl)-glycerol + CoA. The enzyme catalyses all-trans-retinol + hexadecanoyl-CoA = all-trans-retinyl hexadecanoate + CoA. The catalysed reaction is 1-O-(9Z-octadecenyl)-glycerol + (9Z)-octadecenoyl-CoA = 1-O-(9Z-octadecyl)-3-(9Z-octadecenoyl)-glycerol + CoA. It catalyses the reaction 1-(9Z-octadecenoyl)-glycerol + (9Z)-octadecenoyl-CoA = 1,2-di-(9Z-octadecenoyl)-glycerol + CoA. It carries out the reaction 1,2-di-(9Z-octadecenoyl)-sn-glycerol + hexadecanoyl-CoA = 1,2-di-(9Z)-octadecenoyl-3-hexadecanoyl-sn-glycerol + CoA. The enzyme catalyses 1,3-di-(9Z-octadecenoyl)-glycerol + (9Z)-octadecenoyl-CoA = 1,2,3-tri-(9Z-octadecenoyl)-glycerol + CoA. The catalysed reaction is 2,3-di-(9Z)-octadecenoyl-sn-glycerol + (9Z)-octadecenoyl-CoA = 1,2,3-tri-(9Z-octadecenoyl)-glycerol + CoA. It catalyses the reaction 2-(9Z-octadecenoyl)-glycerol + hexadecanoyl-CoA = 1-hexadecanoyl-2-(9Z-octadecenoyl)-sn-glycerol + CoA. It functions in the pathway glycerolipid metabolism; triacylglycerol biosynthesis. Inhibited by niacin. Its function is as follows. Essential acyltransferase that catalyzes the terminal and only committed step in triacylglycerol synthesis by using diacylglycerol and fatty acyl CoA as substrates. Required for synthesis and storage of intracellular triglycerides. Probably plays a central role in cytosolic lipid accumulation. In liver, is primarily responsible for incorporating endogenously synthesized fatty acids into triglycerides. Also functions as an acyl-CoA retinol acyltransferase (ARAT). Also able to use 1-monoalkylglycerol (1-MAkG) as an acyl acceptor for the synthesis of monoalkyl-monoacylglycerol (MAMAG). This is Diacylglycerol O-acyltransferase 2 from Rattus norvegicus (Rat).